The primary structure comprises 183 residues: CyanoP (183 aa).

Positions 1–19 are cleaved as a signal peptide; the sequence is MLQRFFATALAIFVVLLGG. The N-palmitoyl cysteine moiety is linked to residue cysteine 20. Cysteine 20 is lipidated: S-diacylglycerol cysteine. Positions 31, 34, 54, 58, 63, 87, 91, 142, 163, and 164 each coordinate Zn(2+).

Belongs to the PsbP family. CyanoP subfamily. In terms of assembly, monomer. Present in very small amounts in PSII. It depends on Zn(2+) as a cofactor.

The protein localises to the cellular thylakoid membrane. Its function is as follows. Plays a role in the early stages of photosystem II (PSII) assembly; binds to D2 (psbD) and may facilitate its incorporation into PSII. Present in less than 1% of PSII preparations. This is CyanoP from Thermosynechococcus vestitus (strain NIES-2133 / IAM M-273 / BP-1).